Reading from the N-terminus, the 1063-residue chain is MSHIQQAVDIANSSTAGNDLKKQALDFLQQLKSSEDAVQVFSQYLQDPVASDVGRFFALQVLSEQALELPANHEKLYALQQSALQFLRTQLENSSSDGARVSGVGQGSKGVKSTPPEFVRNKVAELFAHLFYNMYGEVNNNMWSSFFVDLIQLVGIASLRDSKSTGVEFNAIGLDLFFRICASINTEIGDQAFVRSKEVQLKNNELKDYMRVQDVELLSNIWFSALLNCQQLPVLASLVLQCVGSYISWIDINLIVQQSYIGTIYEYLKFPQTKLACGQCLCEIISKKMKPADKLQLLSMLNLTDRVVATGSAEDLDVLEQMAKLTNGVALELSMVMDQCNDSQELQSVSSAADEQIINVVSPLVLKFMAHEYDSVTQQCFSFVTNYLAVMKKLFALGGKPGSAVAVNSKRIPIDPAHLNFLKSLGTVCVLKMKIDDSCDSIDDNEEIDEFVENIRSKLKTFQDSIAVINPELYFDIISDNIEQSITEQQDWRVLELAIYQLHNFAESIRNNLFGVNKTEISTSKPAQLMEKYMTTLLNHPTLFQMNNPLVQISFFELVVRHNNFIQVENKDLTLLNIFCTPFSMFSGNERVRLRTWYLFTRLIKTSKPKLSTDFLSMLLSKISPLLSIKASPLAQELDTIFDSQLYLFEGTGVLIGANVNNEYEILDGVLTPLFADLEQCISAQVKNPQVVLQTHHILMAIGTVARGVHSGLVPDNQVNNAKVSERVICKSLIEKFSNIAEVILVTFSYFNKFETIRDAARFSFSRLIPILNNQIIPFASRLISIFLNSDLKPLEMGDFIGFLGQMIHMFKDDDNCYQLFNNLFTPVVEKVFTLETQLEQESSTSSESKSSNGKNVIVTDSFREKINLKKSYYGLLATFVSNNCTSLLLTESNKNILPRVLTDLLSYTAEEIHETSTMKLSINVLVNFINFFGTGICTDPKDRNAINVNKLDGLNEFFITTSIPLLFEIPFKPEYEFNIQDGGCRVIACDLSRLLKALYNINNSSTNNNINENACVKYLTEIYFPQIQFPQSLVVEFINALGTLDAKQFEKYFVQFITNMKQ.

It belongs to the exportin family.

The protein localises to the nucleus. It localises to the cytoplasm. Its function is as follows. tRNA nucleus export receptor which facilitates tRNA translocation across the nuclear pore complex. Involved in pre-tRNA splicing, probably by affecting the interaction of pre-tRNA with splicing endonuclease. In Kluyveromyces lactis (strain ATCC 8585 / CBS 2359 / DSM 70799 / NBRC 1267 / NRRL Y-1140 / WM37) (Yeast), this protein is Exportin-T (LOS1).